The sequence spans 319 residues: FAD-dependent oxidoreductase FVFD30 (319 aa).

FAD is bound by residues arginine 6, aspartate 18, and lysine 25. NAD(+) contacts are provided by lysine 129 and glycine 188. Positions 129 and 188 each coordinate NADP(+). Residues aspartate 228 and tyrosine 265 each contribute to the FAD site. Aspartate 228 provides a ligand contact to 6-hydroxy-FAD. Tyrosine 265 lines the NAD(+) pocket. Tyrosine 265 lines the NADP(+) pocket. The chain crosses the membrane as a helical span at residues 281–301; sequence GVGYFGVWWGIVIGGWLASLL.

It belongs to the FAD-dependent oxidoreductase family.

It localises to the membrane. Probable FAD-dependent oxidoreductase that plays a role in the regulation of fruiting body development. The sequence is that of FAD-dependent oxidoreductase FVFD30 from Flammulina velutipes (Agaricus velutipes).